Consider the following 441-residue polypeptide: Proline--tRNA ligase (441 aa).

This sequence belongs to the class-II aminoacyl-tRNA synthetase family. ProS type 2 subfamily. As to quaternary structure, homodimer.

The protein resides in the cytoplasm. The catalysed reaction is tRNA(Pro) + L-proline + ATP = L-prolyl-tRNA(Pro) + AMP + diphosphate. In terms of biological role, catalyzes the attachment of proline to tRNA(Pro) in a two-step reaction: proline is first activated by ATP to form Pro-AMP and then transferred to the acceptor end of tRNA(Pro). The chain is Proline--tRNA ligase from Afipia carboxidovorans (strain ATCC 49405 / DSM 1227 / KCTC 32145 / OM5) (Oligotropha carboxidovorans).